We begin with the raw amino-acid sequence, 146 residues long: Deoxyuridine 5'-triphosphate nucleotidohydrolase (146 aa).

Substrate contacts are provided by residues 66–68, N79, and 83–85; these read RSG and TID.

It belongs to the dUTPase family. Requires Mg(2+) as cofactor.

The catalysed reaction is dUTP + H2O = dUMP + diphosphate + H(+). It functions in the pathway pyrimidine metabolism; dUMP biosynthesis; dUMP from dCTP (dUTP route): step 2/2. Functionally, this enzyme is involved in nucleotide metabolism: it produces dUMP, the immediate precursor of thymidine nucleotides and it decreases the intracellular concentration of dUTP so that uracil cannot be incorporated into DNA. The sequence is that of Deoxyuridine 5'-triphosphate nucleotidohydrolase from Citrifermentans bemidjiense (strain ATCC BAA-1014 / DSM 16622 / JCM 12645 / Bem) (Geobacter bemidjiensis).